We begin with the raw amino-acid sequence, 123 residues long: Small ribosomal subunit protein uS12 (123 aa).

A 3-methylthioaspartic acid modification is found at aspartate 89.

Belongs to the universal ribosomal protein uS12 family. As to quaternary structure, part of the 30S ribosomal subunit. Contacts proteins S8 and S17. May interact with IF1 in the 30S initiation complex.

Functionally, with S4 and S5 plays an important role in translational accuracy. In terms of biological role, interacts with and stabilizes bases of the 16S rRNA that are involved in tRNA selection in the A site and with the mRNA backbone. Located at the interface of the 30S and 50S subunits, it traverses the body of the 30S subunit contacting proteins on the other side and probably holding the rRNA structure together. The combined cluster of proteins S8, S12 and S17 appears to hold together the shoulder and platform of the 30S subunit. This is Small ribosomal subunit protein uS12 from Beijerinckia indica subsp. indica (strain ATCC 9039 / DSM 1715 / NCIMB 8712).